The primary structure comprises 312 residues: DNA-directed RNA polymerase subunit alpha (312 aa).

An alpha N-terminal domain (alpha-NTD) region spans residues Met-1–Thr-229. The tract at residues Ile-246–Ala-312 is alpha C-terminal domain (alpha-CTD).

This sequence belongs to the RNA polymerase alpha chain family. In cyanobacteria the RNAP catalytic core is composed of 2 alpha, 1 beta, 1 beta', 1 gamma and 1 omega subunit. When a sigma factor is associated with the core the holoenzyme is formed, which can initiate transcription.

It carries out the reaction RNA(n) + a ribonucleoside 5'-triphosphate = RNA(n+1) + diphosphate. DNA-dependent RNA polymerase catalyzes the transcription of DNA into RNA using the four ribonucleoside triphosphates as substrates. The protein is DNA-directed RNA polymerase subunit alpha of Parasynechococcus marenigrum (strain WH8102).